Consider the following 265-residue polypeptide: MSSDTQRWFGVVSLFPEMFQTFTEQGVTGRAVKSGKLKVDFFNPRDFTHDKHRTVDDRPYGGGPGMLMMVQPLLDAIRAAKQAAEKKTKVIYLSPQGKTLTQRGVKQLSENESVILVAGRYEGIDERVIEAEIDEEWSVGDYILSGGELPAMILMDAVARLVPGVLGHAQSAEQDSFSDGLLDCPHYTRPENLNGQSVPSVLLSGDHQKIKQWRDKQSLGRTWQRRPELLNDLALTEEQQRLLDEYQQELLQQNGSYSGMRGYDE.

S-adenosyl-L-methionine-binding positions include G119 and 139–144 (VGDYIL).

It belongs to the RNA methyltransferase TrmD family. Homodimer.

It localises to the cytoplasm. The catalysed reaction is guanosine(37) in tRNA + S-adenosyl-L-methionine = N(1)-methylguanosine(37) in tRNA + S-adenosyl-L-homocysteine + H(+). Its function is as follows. Specifically methylates guanosine-37 in various tRNAs. In Pseudoalteromonas atlantica (strain T6c / ATCC BAA-1087), this protein is tRNA (guanine-N(1)-)-methyltransferase.